The following is a 227-amino-acid chain: Ribonuclease 3 (227 aa).

The RNase III domain maps to 4–126 (LDRLERKIGY…IIGAMSLDQG (123 aa)). Glu39 contributes to the Mg(2+) binding site. Residue Asp43 is part of the active site. 2 residues coordinate Mg(2+): Asp112 and Glu115. The active site involves Glu115. Positions 153 to 226 (DAKTRLQEYL…AEQILKELDI (74 aa)) constitute a DRBM domain.

The protein belongs to the ribonuclease III family. As to quaternary structure, homodimer. The cofactor is Mg(2+).

It is found in the cytoplasm. It catalyses the reaction Endonucleolytic cleavage to 5'-phosphomonoester.. Functionally, digests double-stranded RNA. Involved in the processing of primary rRNA transcript to yield the immediate precursors to the large and small rRNAs (23S and 16S). Processes some mRNAs, and tRNAs when they are encoded in the rRNA operon. Processes pre-crRNA and tracrRNA of type II CRISPR loci if present in the organism. The protein is Ribonuclease 3 of Haemophilus influenzae (strain ATCC 51907 / DSM 11121 / KW20 / Rd).